The primary structure comprises 700 residues: Protein kinase C, eye isozyme (700 aa).

2 Phorbol-ester/DAG-type zinc fingers span residues 71-121 (GHRF…VFKC) and 136-186 (KHGW…PPMC). The C2 domain maps to 189–310 (DISEVRGKLL…LQKEPVDGWY (122 aa)). The Ca(2+) site is built by D222, D228, D281, D283, S286, and D289. A Protein kinase domain is found at 371-629 (FNFVKVIGKG…RQEITTHPFF (259 aa)). ATP-binding positions include 377-385 (IGKGSFGKV) and K400. D495 (proton acceptor) is an active-site residue. The AGC-kinase C-terminal domain occupies 630 to 700 (RNVDWDKAEA…FMNPEFITII (71 aa)).

Belongs to the protein kinase superfamily. AGC Ser/Thr protein kinase family. PKC subfamily. Ca(2+) serves as cofactor. Exclusively expressed in photoreceptor cells.

The catalysed reaction is L-seryl-[protein] + ATP = O-phospho-L-seryl-[protein] + ADP + H(+). It carries out the reaction L-threonyl-[protein] + ATP = O-phospho-L-threonyl-[protein] + ADP + H(+). This is a calcium-activated, phospholipid-dependent, serine- and threonine-specific enzyme. This isozyme is a negative regulator of the visual transduction cascade and has been shown to be required for photoreceptor cell inactivation and light adaptation. Negative regulation is dependent on interaction with scaffolding protein inaD. Acts in a hh-signaling pathway which regulates the Duox-dependent gut immune response to bacterial uracil; required for the activation of Cad99C and consequently Cad99C-dependent endosome formation, which is essential for the Duox-dependent production of reactive oxygen species (ROS) in response to intestinal bacterial infection. This chain is Protein kinase C, eye isozyme (inaC), found in Drosophila melanogaster (Fruit fly).